A 496-amino-acid polypeptide reads, in one-letter code: Alanine aminotransferase 1 (496 aa).

The residue at position 2 (A2) is an N-acetylalanine. A Phosphothreonine modification is found at T22. K314 carries the N6-(pyridoxal phosphate)lysine modification.

This sequence belongs to the class-I pyridoxal-phosphate-dependent aminotransferase family. Alanine aminotransferase subfamily. In terms of assembly, homodimer. Pyridoxal 5'-phosphate serves as cofactor. In terms of tissue distribution, liver, kidney, heart, and skeletal muscles. Expressed at moderate levels in the adipose tissue.

Its subcellular location is the cytoplasm. It carries out the reaction L-alanine + 2-oxoglutarate = pyruvate + L-glutamate. It participates in amino-acid degradation; L-alanine degradation via transaminase pathway; pyruvate from L-alanine: step 1/1. Functionally, catalyzes the reversible transamination between alanine and 2-oxoglutarate to form pyruvate and glutamate. Participates in cellular nitrogen metabolism and also in liver gluconeogenesis starting with precursors transported from skeletal muscles. In Homo sapiens (Human), this protein is Alanine aminotransferase 1 (GPT).